The chain runs to 118 residues: Large ribosomal subunit protein bL17 (118 aa).

The protein belongs to the bacterial ribosomal protein bL17 family. In terms of assembly, part of the 50S ribosomal subunit. Contacts protein L32.

The protein is Large ribosomal subunit protein bL17 of Aster yellows witches'-broom phytoplasma (strain AYWB).